We begin with the raw amino-acid sequence, 165 residues long: V-type proton ATPase 16 kDa proteolipid subunit (165 aa).

At 1–10 (MSSVFSGDET) the chain is on the lumenal side. Residues 11-33 (APFFGFLGAASALIFSCMGAAYG) traverse the membrane as a helical segment. Topologically, residues 34 to 55 (TAKSGVGVASMGVMRPELVMKS) are cytoplasmic. The helical transmembrane segment at 56 to 76 (IVPVVMAGVLGIYGLIIAVII) threads the bilayer. Residues 77-95 (STGINPKAKPYYLFDGYAH) are Lumenal-facing. Residues 96–117 (LSSGLACGLAGLAAGMAIGIVG) form a helical membrane-spanning segment. The Cytoplasmic portion of the chain corresponds to 118-129 (DAGVRANAQQPK). The helical transmembrane segment at 130 to 155 (LFVGMILILIFAEALALYGLIVGIIL) threads the bilayer. Residues 156 to 165 (SSRAGQSRAD) are Lumenal-facing.

The protein belongs to the V-ATPase proteolipid subunit family. V-ATPase is a heteromultimeric enzyme composed of a peripheral catalytic V1 complex (main components: subunits A, B, C, D, E, and F) attached to an integral membrane V0 proton pore complex (main component: the proteolipid protein; which is present as a hexamer that forms the proton-conducting pore).

The protein localises to the vacuole membrane. In terms of biological role, proton-conducting pore forming subunit of the membrane integral V0 complex of vacuolar ATPase. V-ATPase is responsible for acidifying a variety of intracellular compartments in eukaryotic cells. In Oryza sativa subsp. indica (Rice), this protein is V-type proton ATPase 16 kDa proteolipid subunit (VATP-P1).